The chain runs to 126 residues: NADP-reducing hydrogenase subunit HndB (126 aa).

As to quaternary structure, heterotetramer composed of HndA, HndB, HndC and HndD subunits. HndA and HndB could form a heterodimeric intermediate in the electron transfer between the active site of hydrogenase subunit HndD and the NADP reduction site of the reducing subunit HndC.

It carries out the reaction H2 + NADP(+) = NADPH + H(+). Its activity is regulated as follows. Inhibited by oxygen. In terms of biological role, catalyzes the reduction of NADP in the presence of molecular H2 to yield NADPH. This chain is NADP-reducing hydrogenase subunit HndB (hndB), found in Solidesulfovibrio fructosivorans (Desulfovibrio fructosivorans).